A 91-amino-acid chain; its full sequence is Lipolysis-activating peptide 1-alpha chain (91 aa).

A signal peptide spans 1–21 (MNIKLFCFLSILISLTGLSLS). An LCN-type CS-alpha/beta domain is found at 23 to 87 (DDGNYPIDAN…FFDAYKTYCK (65 aa)). 3 disulfides stabilise this stretch: Cys-38–Cys-61, Cys-47–Cys-66, and Cys-51–Cys-68.

The protein belongs to the long (3 C-C) scorpion toxin superfamily. Heterodimer of this alpha chain and a beta chain (AC D9U2A2). As to expression, expressed by the venom gland.

Its subcellular location is the secreted. Its function is as follows. The heterodimer LVP1 induces lipolysis in rat adipocytes. Induction of lipolysis by LVP1 appears to be mediated through the beta-2 adrenergic receptor pathway (ADRB2). The sequence is that of Lipolysis-activating peptide 1-alpha chain from Lychas mucronatus (Chinese swimming scorpion).